The following is an 815-amino-acid chain: Cell division control protein 53 (815 aa).

Residues 9–280 (DDLEATWNFI…WDDHTKKPLS (272 aa)) are required for interaction with SKP1/CBF3D and F-box protein. A required for interaction with CDC34/UBC3 region spans residues 448 to 748 (KKATKPEVAS…IEKELNTERQ (301 aa)). The Cullin neddylation domain maps to 746 to 807 (ERQIFLEACI…QKGYLQRGDD (62 aa)). Residue lysine 760 forms a Glycyl lysine isopeptide (Lys-Gly) (interchain with G-Cter in NEDD8) linkage.

This sequence belongs to the cullin family. As to quaternary structure, component of multiple SCF (SKP1-CUL1-F-box) E3 ubiquitin-protein ligase complexes formed of CUL1, SKP1/HRT1, RBX1 and a variable F-box domain-containing protein as substrate-specific adapter. Component of the SCF(CDC4) complex containing CDC4. Component of the SCF(MET30) complex containing MET30. Component of the SCF(GRR1) complex containing GRR1. Component of the probable SCF(DIA2) complex containing DIA2. Component of the probable SCF(YDR131C) complex containing YDR131C. Component of the probable SCF(YDR306C) complex containing YDR306C. Component of the probable SCF(YLR224W) complex containing YLR224W. Component of the probable SCF(YJL149W) complex containing YJL149W. Component of the probable SCF(YNL311C) complex containing YNL311C. Component of the probable SCF(MDM30) complex containing MDM30. Component of the probable SCF(UFO1) complex containing UFO1. Component of the probable SCF(HRT3) complex containing HRT3. Component of the probable SCF(YBR280C) complex containing YBR280C. Component of the probable SCF(YBR352W) complex containing YBR352W. Interacts with DCN1, YBR280C, YLR224W and YLR352W. The unneddylated form interacts with LAG2/CAND1 and the interaction mediates the exchange of the F-box substrate-specific subunit. Neddylated; enhancing the ubiquitin-ligase activity.

The protein localises to the cytoplasm. It is found in the nucleus. Functionally, core component of multiple cullin-RING-based SCF (SKP1-CUL1-F-box) E3 ubiquitin-protein ligase complexes which mediate the ubiquitination and subsequent proteasomal degradation of target proteins. As a scaffold protein may contribute to catalysis through positioning of the substrate and the ubiquitin-conjugating enzyme. The SCF complex associates with CDC34 as the E2 ubiquitin-conjugating enzyme. The functional specificity of the SCF complex depends on the type of F-box protein. SCF(CDC4) controls the G1-to-S phase transition; it directs ubiquitination of the phosphorylated CDK inhibitor SIC1 and of CDC6. SCF(CDC4) directs ubiquitination of GCN4. SCF(GRR1) directs ubiquitination of phosphorylated CLN1, CLN2 and GIC2. SCF(MET30) directs ubiquitination of MET4. SCF(DIA2) is specifically involved in the pheromone induced degradation of phosphorylated TEC1. SCF(MDM30) seems to direct ubiquitination of FZ01. Involved in the regulation of methionine biosynthesis genes. This chain is Cell division control protein 53 (CDC53), found in Saccharomyces cerevisiae (strain ATCC 204508 / S288c) (Baker's yeast).